The sequence spans 109 residues: Large ribosomal subunit protein uL22 (109 aa).

This sequence belongs to the universal ribosomal protein uL22 family. In terms of assembly, part of the 50S ribosomal subunit.

Its function is as follows. This protein binds specifically to 23S rRNA; its binding is stimulated by other ribosomal proteins, e.g. L4, L17, and L20. It is important during the early stages of 50S assembly. It makes multiple contacts with different domains of the 23S rRNA in the assembled 50S subunit and ribosome. In terms of biological role, the globular domain of the protein is located near the polypeptide exit tunnel on the outside of the subunit, while an extended beta-hairpin is found that lines the wall of the exit tunnel in the center of the 70S ribosome. The protein is Large ribosomal subunit protein uL22 of Cupriavidus necator (strain ATCC 17699 / DSM 428 / KCTC 22496 / NCIMB 10442 / H16 / Stanier 337) (Ralstonia eutropha).